A 368-amino-acid chain; its full sequence is MSGSTLGHLFCVTNFGESHGPAIGCVIDGCPPGMSLSEADIQPELDRRRPGTSRHVTQRNEPDAVEILSGVHEGRTTGTPICLLIRNTDQRSKDYGNIVQTFRPGHADYTYWHKYGLRDPRGGGRSSARLTAPMVGAGAVAKKWLKEHHGIAFRGGMAALGEIDIAFEGWQHVPDNPFFAPNASQIGQLEDFMDALRKEGDSVGARIVVEATGVPVGWGEPLFDKLDADIAHVMMGLNAVKGVEIGAGFASVAHRGSMHGDELTPQGFRSNHAGGVLGGISTGQDIRVSIAIKPTSSIRTPRQSIDLQGQPATVETFGRHDPCVGIRATPIAEALLALVLMDHALRHRAQCGDVRLPVAPIAAHLPDA.

NADP(+)-binding residues include Arg48 and Arg54. FMN-binding positions include 125–127 (RSS), 238–239 (NA), Gly278, 293–297 (KPTSS), and Arg319.

This sequence belongs to the chorismate synthase family. As to quaternary structure, homotetramer. FMNH2 is required as a cofactor.

It carries out the reaction 5-O-(1-carboxyvinyl)-3-phosphoshikimate = chorismate + phosphate. It functions in the pathway metabolic intermediate biosynthesis; chorismate biosynthesis; chorismate from D-erythrose 4-phosphate and phosphoenolpyruvate: step 7/7. Catalyzes the anti-1,4-elimination of the C-3 phosphate and the C-6 proR hydrogen from 5-enolpyruvylshikimate-3-phosphate (EPSP) to yield chorismate, which is the branch point compound that serves as the starting substrate for the three terminal pathways of aromatic amino acid biosynthesis. This reaction introduces a second double bond into the aromatic ring system. The polypeptide is Chorismate synthase (Methylibium petroleiphilum (strain ATCC BAA-1232 / LMG 22953 / PM1)).